Here is a 190-residue protein sequence, read N- to C-terminus: Prostaglandin-H2 D-isomerase (190 aa).

The signal sequence occupies residues 1–22; sequence MATHHTLWMGLVLLGLLGGLQA. Asn-51 carries N-linked (GlcNAc...) asparagine glycosylation. The active-site Nucleophile is the Cys-65. N-linked (GlcNAc...) asparagine glycosylation occurs at Asn-78. A disulfide bridge links Cys-89 with Cys-186.

Belongs to the calycin superfamily. Lipocalin family. As to quaternary structure, monomer.

It localises to the rough endoplasmic reticulum. The protein localises to the nucleus membrane. The protein resides in the golgi apparatus. Its subcellular location is the cytoplasm. It is found in the perinuclear region. It localises to the secreted. The enzyme catalyses prostaglandin H2 = prostaglandin D2. Its function is as follows. Catalyzes the conversion of PGH2 to PGD2, a prostaglandin involved in smooth muscle contraction/relaxation and a potent inhibitor of platelet aggregation. Involved in a variety of CNS functions, such as sedation, NREM sleep and PGE2-induced allodynia, and may have an anti-apoptotic role in oligodendrocytes. Binds small non-substrate lipophilic molecules, including biliverdin, bilirubin, retinal, retinoic acid and thyroid hormone, and may act as a scavenger for harmful hydrophobic molecules and as a secretory retinoid and thyroid hormone transporter. Possibly involved in development and maintenance of the blood-brain, blood-retina, blood-aqueous humor and blood-testis barrier. It is likely to play important roles in both maturation and maintenance of the central nervous system and male reproductive system. Involved in PLA2G3-dependent maturation of mast cells. PLA2G3 is secreted by immature mast cells and acts on nearby fibroblasts upstream to PTDGS to synthesize PGD2, which in turn promotes mast cell maturation and degranulation via PTGDR. The protein is Prostaglandin-H2 D-isomerase (PTGDS) of Macaca fuscata fuscata (Japanese macaque).